Consider the following 240-residue polypeptide: Ribonuclease PH (240 aa).

Residues Arg86 and 124–126 (GTR) contribute to the phosphate site.

Belongs to the RNase PH family. Homohexameric ring arranged as a trimer of dimers.

The catalysed reaction is tRNA(n+1) + phosphate = tRNA(n) + a ribonucleoside 5'-diphosphate. Phosphorolytic 3'-5' exoribonuclease that plays an important role in tRNA 3'-end maturation. Removes nucleotide residues following the 3'-CCA terminus of tRNAs; can also add nucleotides to the ends of RNA molecules by using nucleoside diphosphates as substrates, but this may not be physiologically important. Probably plays a role in initiation of 16S rRNA degradation (leading to ribosome degradation) during starvation. The chain is Ribonuclease PH from Rickettsia prowazekii (strain Madrid E).